A 94-amino-acid polypeptide reads, in one-letter code: Phosphoribosyl-ATP pyrophosphatase (94 aa).

It belongs to the PRA-PH family.

The protein localises to the cytoplasm. It catalyses the reaction 1-(5-phospho-beta-D-ribosyl)-ATP + H2O = 1-(5-phospho-beta-D-ribosyl)-5'-AMP + diphosphate + H(+). It participates in amino-acid biosynthesis; L-histidine biosynthesis; L-histidine from 5-phospho-alpha-D-ribose 1-diphosphate: step 2/9. This Pyrobaculum aerophilum (strain ATCC 51768 / DSM 7523 / JCM 9630 / CIP 104966 / NBRC 100827 / IM2) protein is Phosphoribosyl-ATP pyrophosphatase (hisE).